The sequence spans 327 residues: uncharacterized protein (327 aa).

An N-terminal signal peptide occupies residues 1–24 (MKQPGFIRLATLALLSTLSFFSHG).

This is an uncharacterized protein from Salmonella typhimurium (strain LT2 / SGSC1412 / ATCC 700720).